Here is a 414-residue protein sequence, read N- to C-terminus: Multidrug resistance protein MdtG (414 aa).

Transmembrane regions (helical) follow at residues 14-34 (LFVT…IMPF), 56-76 (LVFS…GSLA), 89-109 (ALGM…WQFL), 113-133 (ALLG…ATQV), 144-164 (TLST…GLLA), 171-191 (PVFF…WFYV), 219-239 (ILSL…IAPI), 254-274 (LAFV…ISAP), 288-308 (ILIA…FVQT), and 376-396 (AVFC…YWCL).

The protein belongs to the major facilitator superfamily. DHA1 family. MdtG (TC 2.A.1.2.20) subfamily.

Its subcellular location is the cell inner membrane. The protein is Multidrug resistance protein MdtG of Yersinia enterocolitica serotype O:8 / biotype 1B (strain NCTC 13174 / 8081).